A 499-amino-acid polypeptide reads, in one-letter code: Rhamnogalacturonan I rhamnosyltransferase 1 (499 aa).

Residues 31–50 (WFVRVCSSILVWTCLVQLFA) traverse the membrane as a helical; Signal-anchor for type II membrane protein segment. 3 N-linked (GlcNAc...) asparagine glycosylation sites follow: N88, N121, and N207. Substrate is bound at residue 261 to 263 (HLR). N-linked (GlcNAc...) asparagine glycosylation is found at N375, N435, and N496.

Belongs to the glycosyltransferase GT106 family.

It localises to the golgi apparatus membrane. It catalyses the reaction alpha-D-galacturonosyl-[(1-&gt;2)-alpha-L-rhamnosyl-(1-&gt;4)-alpha-D-galacturonosyl](n) + UDP-beta-L-rhamnose = [(1-&gt;2)-alpha-L-rhamnosyl-(1-&gt;4)-alpha-D-galacturonosyl](n+1) + UDP + H(+). It participates in glycan metabolism; pectin biosynthesis. In terms of biological role, glycosyltransferase involved in the formation of rhamnogalacturonan I (RG-I) oligosaccharides in the seed coat mucilage, which is a specialized cell wall with abundant RG-I. Transfers the rhamnose residue from UDP-beta-L-rhamnose to RG-I oligosaccharides. The chain is Rhamnogalacturonan I rhamnosyltransferase 1 from Arabidopsis thaliana (Mouse-ear cress).